A 509-amino-acid polypeptide reads, in one-letter code: uncharacterized protein (509 aa).

A run of 13 helical transmembrane segments spans residues 14–34, 117–137, 158–178, 188–208, 209–229, 240–260, 303–323, 324–344, 359–379, 399–419, 423–443, 458–478, and 484–504; these read SAFTILFAILILAVGLTWVIP, TIEAVDVMVFIFVLGGMIGVI, EFFIVFCVSVLMVLGGTTCGI, ILVPVFLALGYDAIVCVGAIF, LAASMGTAFSTINPFSVVIAS, IGFRALGLVLGATCVIAYLYW, LILTLFCISFPIMIWGVMVGG, WWFPQMAASFLAITIIIMFIS, ASELVGVSLIIGLARGVNLVL, MPGSVFILGQLVVFIFLGLIV, SGLAVLSMPIMAPLADSVGIP, MLFLAPTGLVLVTLQMLQIPF, and FVMPMIGCLLLIGSILLVVQV.

It to E.coli YfcC. This sequence to B.subtilis YcgA.

It localises to the cell membrane. This is an uncharacterized protein from Haemophilus influenzae (strain ATCC 51907 / DSM 11121 / KW20 / Rd).